A 526-amino-acid polypeptide reads, in one-letter code: Tyrosine 2,3-aminomutase (526 aa).

Catalysis depends on tyrosine 41, which acts as the Proton donor/acceptor. Residue histidine 71 coordinates substrate. A cross-link (5-imidazolinone (Ala-Gly)) is located at residues 130–132 (ASG). A 2,3-didehydroalanine (Ser) modification is found at serine 131. Substrate-binding residues include asparagine 183 and arginine 288.

This sequence belongs to the TAL/TAM family. In terms of assembly, homotetramer; dimer of dimers. Contains an active site 4-methylidene-imidazol-5-one (MIO), which is formed autocatalytically by cyclization and dehydration of residues Ala-Ser-Gly.

It catalyses the reaction L-tyrosine = 3-amino-3-(4-hydroxyphenyl)propanoate. The enzyme catalyses L-tyrosine = (E)-4-coumarate + NH4(+). Has aminomutase and, to a much lesser extent, ammonia-lyase activity. Primarily, catalyzes the rearrangement of L-tyrosine to S-beta-tyrosine, which is probably incorporated into secondary metabolite myxovalargin. The aminomutase activity exclusively produces S-beta-tyrosine. This is Tyrosine 2,3-aminomutase from Myxococcus fulvus.